The chain runs to 597 residues: uncharacterized protein (597 aa).

Positions 16-78 (VGRLVWVRRR…LENSKTVKAF (63 aa)) constitute a PWWP domain. Disordered regions lie at residues 126–210 (NLCN…MRGL) and 449–482 (QLKG…STPH). The segment covering 134–143 (EDSKRCLSGK) has biased composition (basic and acidic residues). A compositionally biased stretch (acidic residues) spans 144–161 (EDEDSGSSDAEETEDDEL). Over residues 166-185 (EQLQSSISSQEMNNVGASKV) the composition is skewed to polar residues. The segment covering 450 to 460 (LKGKRNSRQMS) has biased composition (basic residues). Over residues 461-470 (KKQEERRNVY) the composition is skewed to basic and acidic residues.

This is an uncharacterized protein from Arabidopsis thaliana (Mouse-ear cress).